Reading from the N-terminus, the 273-residue chain is Dermonecrotic toxin LarSicTox-alphaIB1b (273 aa).

The active site involves His-5. Mg(2+) is bound by residues Glu-25 and Asp-27. His-41 (nucleophile) is an active-site residue. 2 cysteine pairs are disulfide-bonded: Cys-45–Cys-51 and Cys-47–Cys-190. Asp-85 contributes to the Mg(2+) binding site. N-linked (GlcNAc...) asparagine glycosylation occurs at Asn-250.

The protein belongs to the arthropod phospholipase D family. Class II subfamily. Requires Mg(2+) as cofactor. As to expression, expressed by the venom gland.

Its subcellular location is the secreted. The catalysed reaction is an N-(acyl)-sphingosylphosphocholine = an N-(acyl)-sphingosyl-1,3-cyclic phosphate + choline. The enzyme catalyses an N-(acyl)-sphingosylphosphoethanolamine = an N-(acyl)-sphingosyl-1,3-cyclic phosphate + ethanolamine. It catalyses the reaction a 1-acyl-sn-glycero-3-phosphocholine = a 1-acyl-sn-glycero-2,3-cyclic phosphate + choline. It carries out the reaction a 1-acyl-sn-glycero-3-phosphoethanolamine = a 1-acyl-sn-glycero-2,3-cyclic phosphate + ethanolamine. In terms of biological role, dermonecrotic toxins cleave the phosphodiester linkage between the phosphate and headgroup of certain phospholipids (sphingolipid and lysolipid substrates), forming an alcohol (often choline) and a cyclic phosphate. This toxin acts on sphingomyelin (SM). It may also act on ceramide phosphoethanolamine (CPE), lysophosphatidylcholine (LPC) and lysophosphatidylethanolamine (LPE), but not on lysophosphatidylserine (LPS), and lysophosphatidylglycerol (LPG). It acts by transphosphatidylation, releasing exclusively cyclic phosphate products as second products. Induces dermonecrosis, hemolysis, increased vascular permeability, edema, inflammatory response, and platelet aggregation. This is Dermonecrotic toxin LarSicTox-alphaIB1b from Loxosceles arizonica (Arizona brown spider).